Here is a 138-residue protein sequence, read N- to C-terminus: Large ribosomal subunit protein uL16 (138 aa).

The protein belongs to the universal ribosomal protein uL16 family. Part of the 50S ribosomal subunit.

Its function is as follows. Binds 23S rRNA and is also seen to make contacts with the A and possibly P site tRNAs. This is Large ribosomal subunit protein uL16 from Mycoplasma genitalium (strain ATCC 33530 / DSM 19775 / NCTC 10195 / G37) (Mycoplasmoides genitalium).